Reading from the N-terminus, the 272-residue chain is Dihydropteroate synthase (272 aa).

Residues 1–251 enclose the Pterin-binding domain; it reads MIKTKIMGIL…GVRVHNVLLN (251 aa). Residue Asn-11 participates in Mg(2+) binding. Residues Thr-51, Asp-89, Asn-108, Asp-172, Lys-208, and 244–246 each bind (7,8-dihydropterin-6-yl)methyl diphosphate; that span reads RVH.

Belongs to the DHPS family. As to quaternary structure, homodimer. Mg(2+) is required as a cofactor.

The catalysed reaction is (7,8-dihydropterin-6-yl)methyl diphosphate + 4-aminobenzoate = 7,8-dihydropteroate + diphosphate. The protein operates within cofactor biosynthesis; tetrahydrofolate biosynthesis; 7,8-dihydrofolate from 2-amino-4-hydroxy-6-hydroxymethyl-7,8-dihydropteridine diphosphate and 4-aminobenzoate: step 1/2. Functionally, catalyzes the condensation of para-aminobenzoate (pABA) with 6-hydroxymethyl-7,8-dihydropterin diphosphate (DHPt-PP) to form 7,8-dihydropteroate (H2Pte), the immediate precursor of folate derivatives. This is Dihydropteroate synthase (folP) from Staphylococcus epidermidis (strain ATCC 35984 / DSM 28319 / BCRC 17069 / CCUG 31568 / BM 3577 / RP62A).